We begin with the raw amino-acid sequence, 746 residues long: UvrABC system protein C (746 aa).

The GIY-YIG domain occupies 18-97 (AKPGVYKWRD…IKEFDPRFNV (80 aa)). Residues 211 to 246 (RPYIAQLTRDMKEASAELEFEKAARLRDQIQMLETV) form the UVR domain. Residues 557 to 577 (ANGNDNGEGGSDISGKGHAVP) form a disordered region.

Belongs to the UvrC family. In terms of assembly, interacts with UvrB in an incision complex.

It localises to the cytoplasm. Functionally, the UvrABC repair system catalyzes the recognition and processing of DNA lesions. UvrC both incises the 5' and 3' sides of the lesion. The N-terminal half is responsible for the 3' incision and the C-terminal half is responsible for the 5' incision. The sequence is that of UvrABC system protein C from Bifidobacterium longum (strain NCC 2705).